The sequence spans 353 residues: Ribosomal RNA small subunit methyltransferase H (353 aa).

S-adenosyl-L-methionine-binding positions include 49-51 (GGH), D68, F95, D126, and Q133.

The protein belongs to the methyltransferase superfamily. RsmH family.

The protein resides in the cytoplasm. The enzyme catalyses cytidine(1402) in 16S rRNA + S-adenosyl-L-methionine = N(4)-methylcytidine(1402) in 16S rRNA + S-adenosyl-L-homocysteine + H(+). In terms of biological role, specifically methylates the N4 position of cytidine in position 1402 (C1402) of 16S rRNA. In Corynebacterium urealyticum (strain ATCC 43042 / DSM 7109), this protein is Ribosomal RNA small subunit methyltransferase H.